A 227-amino-acid polypeptide reads, in one-letter code: Translation initiation factor 6 (227 aa).

The protein belongs to the eIF-6 family.

Functionally, binds to the 50S ribosomal subunit and prevents its association with the 30S ribosomal subunit to form the 70S initiation complex. This chain is Translation initiation factor 6, found in Pyrococcus horikoshii (strain ATCC 700860 / DSM 12428 / JCM 9974 / NBRC 100139 / OT-3).